The primary structure comprises 407 residues: Methylthioribose kinase (407 aa).

ATP is bound by residues N40, K57, and 111-113; that span reads EDL. D229 provides a ligand contact to substrate. 246–248 is a binding site for ATP; that stretch reads DAE. R344 serves as a coordination point for substrate.

This sequence belongs to the methylthioribose kinase family. In terms of assembly, homodimer.

The catalysed reaction is 5-(methylsulfanyl)-D-ribose + ATP = 5-(methylsulfanyl)-alpha-D-ribose 1-phosphate + ADP + H(+). It functions in the pathway amino-acid biosynthesis; L-methionine biosynthesis via salvage pathway; S-methyl-5-thio-alpha-D-ribose 1-phosphate from S-methyl-5'-thioadenosine (hydrolase route): step 2/2. Its function is as follows. Catalyzes the phosphorylation of methylthioribose into methylthioribose-1-phosphate. The chain is Methylthioribose kinase from Yersinia pseudotuberculosis serotype IB (strain PB1/+).